The primary structure comprises 1009 residues: DNA ligase 4 (1009 aa).

Disordered regions lie at residues 1–34 (METDQDMHDQAMAGEETDLDEKYPNRPQNKAPTL) and 51–72 (KKKPVGPAGNRRKAGPHGLSAA). The span at 51–65 (KKKPVGPAGNRRKAG) shows a compositional bias: basic residues. The ATP site is built by glutamate 315, lysine 317, leucine 318, arginine 322, glutamate 384, phenylalanine 424, glutamate 484, lysine 489, lysine 506, and lysine 508. Residue lysine 317 is the N6-AMP-lysine intermediate of the active site. Position 384 (glutamate 384) interacts with Mg(2+). Residue glutamate 484 participates in Mg(2+) binding. BRCT domains lie at 715 to 808 (PSGH…PDLL) and 887 to 995 (PCGW…QHMP).

It belongs to the ATP-dependent DNA ligase family. Mg(2+) is required as a cofactor.

The protein resides in the nucleus. It catalyses the reaction ATP + (deoxyribonucleotide)n-3'-hydroxyl + 5'-phospho-(deoxyribonucleotide)m = (deoxyribonucleotide)n+m + AMP + diphosphate.. Its function is as follows. DNA ligase involved in DNA non-homologous end joining (NHEJ); required for double-strand break (DSB) repair. This Emericella nidulans (strain FGSC A4 / ATCC 38163 / CBS 112.46 / NRRL 194 / M139) (Aspergillus nidulans) protein is DNA ligase 4 (lig4).